The chain runs to 338 residues: Phenylalanine--tRNA ligase alpha subunit (338 aa).

Residue Glu-252 coordinates Mg(2+).

This sequence belongs to the class-II aminoacyl-tRNA synthetase family. Phe-tRNA synthetase alpha subunit type 1 subfamily. In terms of assembly, tetramer of two alpha and two beta subunits. Mg(2+) is required as a cofactor.

It is found in the cytoplasm. The catalysed reaction is tRNA(Phe) + L-phenylalanine + ATP = L-phenylalanyl-tRNA(Phe) + AMP + diphosphate + H(+). In Pseudomonas putida (strain ATCC 700007 / DSM 6899 / JCM 31910 / BCRC 17059 / LMG 24140 / F1), this protein is Phenylalanine--tRNA ligase alpha subunit.